Reading from the N-terminus, the 296-residue chain is 1,2-beta-oligomannan phosphorylase (296 aa).

It belongs to the glycosyl hydrolase 130 family. As to quaternary structure, homodimer.

It catalyses the reaction [(1-&gt;2)-beta-D-mannosyl](n) + phosphate = [(1-&gt;2)-beta-D-mannosyl](n-1) + alpha-D-mannose 1-phosphate. Its pathway is nucleotide-sugar biosynthesis; GDP-alpha-D-mannose biosynthesis. Probably involved in a salvage pathway for GDP-D-mannose biosynthesis. Catalyzes the reversible phosphorolysis of 1,2-beta-oligomannan. In phosphorolytic reactions, prefers 1,2-beta-oligomannan with a degree of polymerization (DP) of 3, 4 and 5. Produces alpha-D-mannose 1-phosphate, which is the precursor of GDP-D-mannose. The polypeptide is 1,2-beta-oligomannan phosphorylase (Thermoanaerobacter sp. (strain X514)).